The primary structure comprises 158 residues: 2-C-methyl-D-erythritol 2,4-cyclodiphosphate synthase (158 aa).

Aspartate 9 and histidine 11 together coordinate a divalent metal cation. 4-CDP-2-C-methyl-D-erythritol 2-phosphate is bound by residues 9–11 (DVH) and 35–36 (HS). Histidine 43 is an a divalent metal cation binding site. 4-CDP-2-C-methyl-D-erythritol 2-phosphate-binding positions include 57–59 (DIG), 62–66 (FPDTD), 101–107 (AQKPKMA), 133–136 (TTTE), phenylalanine 140, and arginine 143.

Belongs to the IspF family. Homotrimer. A divalent metal cation serves as cofactor.

It catalyses the reaction 4-CDP-2-C-methyl-D-erythritol 2-phosphate = 2-C-methyl-D-erythritol 2,4-cyclic diphosphate + CMP. It participates in isoprenoid biosynthesis; isopentenyl diphosphate biosynthesis via DXP pathway; isopentenyl diphosphate from 1-deoxy-D-xylulose 5-phosphate: step 4/6. Functionally, involved in the biosynthesis of isopentenyl diphosphate (IPP) and dimethylallyl diphosphate (DMAPP), two major building blocks of isoprenoid compounds. Catalyzes the conversion of 4-diphosphocytidyl-2-C-methyl-D-erythritol 2-phosphate (CDP-ME2P) to 2-C-methyl-D-erythritol 2,4-cyclodiphosphate (ME-CPP) with a corresponding release of cytidine 5-monophosphate (CMP). The protein is 2-C-methyl-D-erythritol 2,4-cyclodiphosphate synthase of Geobacillus sp. (strain WCH70).